A 472-amino-acid chain; its full sequence is Aspartyl/glutamyl-tRNA(Asn/Gln) amidotransferase subunit B (472 aa).

It belongs to the GatB/GatE family. GatB subfamily. In terms of assembly, heterotrimer of A, B and C subunits.

It catalyses the reaction L-glutamyl-tRNA(Gln) + L-glutamine + ATP + H2O = L-glutaminyl-tRNA(Gln) + L-glutamate + ADP + phosphate + H(+). The enzyme catalyses L-aspartyl-tRNA(Asn) + L-glutamine + ATP + H2O = L-asparaginyl-tRNA(Asn) + L-glutamate + ADP + phosphate + 2 H(+). Allows the formation of correctly charged Asn-tRNA(Asn) or Gln-tRNA(Gln) through the transamidation of misacylated Asp-tRNA(Asn) or Glu-tRNA(Gln) in organisms which lack either or both of asparaginyl-tRNA or glutaminyl-tRNA synthetases. The reaction takes place in the presence of glutamine and ATP through an activated phospho-Asp-tRNA(Asn) or phospho-Glu-tRNA(Gln). This Elusimicrobium minutum (strain Pei191) protein is Aspartyl/glutamyl-tRNA(Asn/Gln) amidotransferase subunit B.